A 610-amino-acid chain; its full sequence is Elongation factor 4 (610 aa).

The tr-type G domain maps to 11 to 193; the sequence is ENIRNFSIIA…QIVEKVPAPS (183 aa). Residues 23 to 28 and 140 to 143 contribute to the GTP site; these read DHGKST and NKID.

This sequence belongs to the TRAFAC class translation factor GTPase superfamily. Classic translation factor GTPase family. LepA subfamily.

It is found in the cell membrane. It carries out the reaction GTP + H2O = GDP + phosphate + H(+). Required for accurate and efficient protein synthesis under certain stress conditions. May act as a fidelity factor of the translation reaction, by catalyzing a one-codon backward translocation of tRNAs on improperly translocated ribosomes. Back-translocation proceeds from a post-translocation (POST) complex to a pre-translocation (PRE) complex, thus giving elongation factor G a second chance to translocate the tRNAs correctly. Binds to ribosomes in a GTP-dependent manner. The protein is Elongation factor 4 of Streptococcus equi subsp. zooepidemicus (strain MGCS10565).